Reading from the N-terminus, the 336-residue chain is Pentalenene synthase (336 aa).

Positions 80, 84, 219, 223, and 227 each coordinate Mg(2+). The short motif at 80-84 (DDLFD) is the DDXXD motif element.

The protein belongs to the terpene synthase family. In terms of assembly, monomer. It depends on Mg(2+) as a cofactor.

It catalyses the reaction (2E,6E)-farnesyl diphosphate = pentalenene + diphosphate. It functions in the pathway antibiotic biosynthesis; neopentalenolactone biosynthesis. Functionally, catalyzes the cyclization of farnesyl diphosphate (FPP) to the tricyclic sesquiterpene pentalenene in the biosynthesis of neopentalenolactone antibiotic. The polypeptide is Pentalenene synthase (ptlA) (Streptomyces avermitilis (strain ATCC 31267 / DSM 46492 / JCM 5070 / NBRC 14893 / NCIMB 12804 / NRRL 8165 / MA-4680)).